The following is a 448-amino-acid chain: Zinc finger and BTB domain-containing protein 44 (448 aa).

The BTB domain maps to 31–98 (CDITIRVQDK…AYTATLSINT (68 aa)). Basic and acidic residues predominate over residues 289–298 (LSDEEVHEEV). A disordered region spans residues 289–320 (LSDEEVHEEVSQPVSASQSSMSDQQTVPGSEQ). Low complexity predominate over residues 299–313 (SQPVSASQSSMSDQQ). 2 consecutive C2H2-type zinc fingers follow at residues 394–416 (FQCPTCGVRFTRIQNLKQHMLIH) and 422–444 (FQCDRCGKKFTRAYSLKMHRLKH).

The protein localises to the nucleus. This is Zinc finger and BTB domain-containing protein 44 (zbtb44) from Xenopus tropicalis (Western clawed frog).